The chain runs to 807 residues: Protein WEAK CHLOROPLAST MOVEMENT UNDER BLUE LIGHT 1 (807 aa).

The disordered stretch occupies residues 1–162 (MEDLKTVEAS…GTPKNVDSHR (162 aa)). Polar residues predominate over residues 31 to 40 (RESNIQSATK). A compositionally biased stretch (low complexity) spans 46-73 (QSQTDTEETQQSQTDTEETQQSQTDDTT). A compositionally biased stretch (polar residues) spans 138-157 (RTVSSPRFSGSPVSTGTPKN). Residue Ser-148 is modified to Phosphoserine. Coiled coils occupy residues 191–429 (RMQA…ELVA), 457–489 (DLHAAVASAKKELEEVNVNIEKAAAEVSCLKLA), 516–621 (IAVA…ALEE), and 664–724 (AAVS…WRAE). Disordered regions lie at residues 532 to 565 (IASVQSKEKDAREKMVELPKQLQQAAEEADEAKS) and 722 to 789 (RAEH…KKKK). 3 stretches are compositionally biased toward basic and acidic residues: residues 537–548 (SKEKDAREKMVE), 722–732 (RAEHEQKRKAG), and 739–749 (KNLKESFEGGK). A compositionally biased stretch (polar residues) spans 761–781 (SSPSESYGTEENSETNLSPQT).

It belongs to the WEB family. In terms of assembly, interacts with PMI2. As to expression, ubiquitous but preferentially in chloroplast-containing tissues.

The protein localises to the cytoplasm. Its function is as follows. Required for the chloroplast avoidance response under high intensity blue light. This avoidance response consists in the relocation of chloroplasts on the anticlinal side of exposed cells. Acts in association with PMI2 to maintain the velocity of chloroplast photorelocation movement via cp-actin filaments regulation. This is Protein WEAK CHLOROPLAST MOVEMENT UNDER BLUE LIGHT 1 (WEB1) from Arabidopsis thaliana (Mouse-ear cress).